The following is a 399-amino-acid chain: Accessory Sec system protein translocase subunit SecY2 (399 aa).

The next 10 helical transmembrane spans lie at 14–34, 60–80, 102–122, 128–148, 152–172, 183–203, 237–257, 272–292, 335–355, and 362–382; these read IFFT…SIVS, LNIF…LTLI, ALTL…YINK, SNML…VWLA, TTYG…KSIF, ASLI…LFFI, ISIM…NFIG, FTNP…GYFL, WFGS…ALLV, and VYFT…AETI.

Belongs to the SecY/SEC61-alpha family. SecY2 subfamily. As to quaternary structure, component of the accessory SecA2/SecY2 protein translocase complex required to export cell wall proteins. May form heterotrimers with SecE and SecG subunits.

Its subcellular location is the cell membrane. Its function is as follows. Part of the accessory SecA2/SecY2 system specifically required for export of possible cell wall proteins. The central subunit of a protein translocation channel. The polypeptide is Accessory Sec system protein translocase subunit SecY2 (Staphylococcus epidermidis (strain ATCC 12228 / FDA PCI 1200)).